Consider the following 380-residue polypeptide: Cytochrome b (380 aa).

A run of 4 helical transmembrane segments spans residues 34-54 (FGSLLGICLMTQILTGLLLAM), 78-99 (WLIRNLHANGASFFFICIYLHI), 114-134 (WNTGVILLLTLMATAFVGYVL), and 179-199 (FFALHFLLPFMIAGLTLVHLT). The heme b site is built by H84 and H98. Residues H183 and H197 each coordinate heme b. Residue H202 coordinates a ubiquinone. Transmembrane regions (helical) follow at residues 227-247 (LKDILGFTLMLLPLTTLALFS), 289-309 (LGGVLALAASVLILFLAPFLH), 321-341 (LSQLLFWILVANLFILTWVGS), and 348-368 (FIIIGQLASFTYFTILLILFP).

Belongs to the cytochrome b family. The cytochrome bc1 complex contains 11 subunits: 3 respiratory subunits (MT-CYB, CYC1 and UQCRFS1), 2 core proteins (UQCRC1 and UQCRC2) and 6 low-molecular weight proteins (UQCRH/QCR6, UQCRB/QCR7, UQCRQ/QCR8, UQCR10/QCR9, UQCR11/QCR10 and a cleavage product of UQCRFS1). This cytochrome bc1 complex then forms a dimer. Heme b is required as a cofactor.

It localises to the mitochondrion inner membrane. Component of the ubiquinol-cytochrome c reductase complex (complex III or cytochrome b-c1 complex) that is part of the mitochondrial respiratory chain. The b-c1 complex mediates electron transfer from ubiquinol to cytochrome c. Contributes to the generation of a proton gradient across the mitochondrial membrane that is then used for ATP synthesis. The sequence is that of Cytochrome b (MT-CYB) from Procellaria parkinsoni (Black petrel).